We begin with the raw amino-acid sequence, 286 residues long: Glycine--tRNA ligase alpha subunit (286 aa).

The protein belongs to the class-II aminoacyl-tRNA synthetase family. In terms of assembly, tetramer of two alpha and two beta subunits.

The protein resides in the cytoplasm. It catalyses the reaction tRNA(Gly) + glycine + ATP = glycyl-tRNA(Gly) + AMP + diphosphate. This chain is Glycine--tRNA ligase alpha subunit, found in Thermotoga neapolitana (strain ATCC 49049 / DSM 4359 / NBRC 107923 / NS-E).